Here is a 154-residue protein sequence, read N- to C-terminus: Myoglobin (154 aa).

Positions 2 to 148 (GLSDGEWQLV…FRNDIAAKYK (147 aa)) constitute a Globin domain. The residue at position 4 (Ser-4) is a Phosphoserine. His-65 provides a ligand contact to nitrite. Position 65 (His-65) interacts with O2. Thr-68 is subject to Phosphothreonine. His-94 lines the heme b pocket.

It belongs to the globin family. In terms of assembly, monomeric.

It localises to the cytoplasm. The protein resides in the sarcoplasm. It catalyses the reaction Fe(III)-heme b-[protein] + nitric oxide + H2O = Fe(II)-heme b-[protein] + nitrite + 2 H(+). The enzyme catalyses H2O2 + AH2 = A + 2 H2O. Monomeric heme protein which primary function is to store oxygen and facilitate its diffusion within muscle tissues. Reversibly binds oxygen through a pentacoordinated heme iron and enables its timely and efficient release as needed during periods of heightened demand. Depending on the oxidative conditions of tissues and cells, and in addition to its ability to bind oxygen, it also has a nitrite reductase activity whereby it regulates the production of bioactive nitric oxide. Under stress conditions, like hypoxia and anoxia, it also protects cells against reactive oxygen species thanks to its pseudoperoxidase activity. The sequence is that of Myoglobin (MB) from Lutra lutra (European river otter).